Reading from the N-terminus, the 484-residue chain is Adenylyltransferase and sulfurtransferase uba4 (484 aa).

A compositionally biased stretch (low complexity) spans alanine 39–alanine 49. The interval alanine 39–arginine 58 is disordered. ATP is bound by residues glycine 98, aspartate 119, serine 126 to arginine 130, lysine 143, and aspartate 187 to asparagine 188. Positions 236 and 239 each coordinate Zn(2+). The active-site Glycyl thioester intermediate; for adenylyltransferase activity is cysteine 253. Residues cysteine 313 and cysteine 316 each coordinate Zn(2+). Positions proline 370–proline 482 constitute a Rhodanese domain. Cysteine 437 functions as the Cysteine persulfide intermediate; for sulfurtransferase activity in the catalytic mechanism.

In the N-terminal section; belongs to the HesA/MoeB/ThiF family. UBA4 subfamily. The cofactor is Zn(2+).

The protein resides in the cytoplasm. It localises to the cytosol. The enzyme catalyses [molybdopterin-synthase sulfur-carrier protein]-C-terminal Gly-Gly + ATP + H(+) = [molybdopterin-synthase sulfur-carrier protein]-C-terminal Gly-Gly-AMP + diphosphate. It catalyses the reaction [molybdopterin-synthase sulfur-carrier protein]-C-terminal Gly-Gly-AMP + S-sulfanyl-L-cysteinyl-[cysteine desulfurase] + AH2 = [molybdopterin-synthase sulfur-carrier protein]-C-terminal-Gly-aminoethanethioate + L-cysteinyl-[cysteine desulfurase] + A + AMP + 2 H(+). It participates in tRNA modification; 5-methoxycarbonylmethyl-2-thiouridine-tRNA biosynthesis. The protein operates within cofactor biosynthesis; molybdopterin biosynthesis. In terms of biological role, plays a central role in 2-thiolation of mcm(5)S(2)U at tRNA wobble positions of cytosolic tRNA(Lys), tRNA(Glu) and tRNA(Gln). Also essential during biosynthesis of the molybdenum cofactor. Acts by mediating the C-terminal thiocarboxylation of sulfur carriers urm1 and mocs2a. Its N-terminus first activates urm1 and mocs2a as acyl-adenylates (-COAMP), then the persulfide sulfur on the catalytic cysteine is transferred to urm1 and mocs2a to form thiocarboxylation (-COSH) of their C-terminus. The reaction probably involves hydrogen sulfide that is generated from the persulfide intermediate and that acts as a nucleophile towards urm1 and mocs2a. Subsequently, a transient disulfide bond is formed. Does not use thiosulfate as sulfur donor; nfs1 probably acting as a sulfur donor for thiocarboxylation reactions. The sequence is that of Adenylyltransferase and sulfurtransferase uba4 from Aspergillus terreus (strain NIH 2624 / FGSC A1156).